Consider the following 228-residue polypeptide: 2-C-methyl-D-erythritol 4-phosphate cytidylyltransferase (228 aa).

This sequence belongs to the IspD/TarI cytidylyltransferase family. IspD subfamily.

It catalyses the reaction 2-C-methyl-D-erythritol 4-phosphate + CTP + H(+) = 4-CDP-2-C-methyl-D-erythritol + diphosphate. Its pathway is isoprenoid biosynthesis; isopentenyl diphosphate biosynthesis via DXP pathway; isopentenyl diphosphate from 1-deoxy-D-xylulose 5-phosphate: step 2/6. Its function is as follows. Catalyzes the formation of 4-diphosphocytidyl-2-C-methyl-D-erythritol from CTP and 2-C-methyl-D-erythritol 4-phosphate (MEP). In Trichormus variabilis (strain ATCC 29413 / PCC 7937) (Anabaena variabilis), this protein is 2-C-methyl-D-erythritol 4-phosphate cytidylyltransferase.